Here is a 224-residue protein sequence, read N- to C-terminus: Probable amino-acid permease protein YxeN (224 aa).

6 consecutive transmembrane segments (helical) span residues 3–23 (TIDWEFMISAFPTLIQALPIT), 24–44 (LFMAIAAMIFAIIGGLILALI), 58–78 (LYISFFRGVPTLVQLFLIYYG), 91–111 (ALTAAIIGLSLKNAAYLAEIF), 157–177 (FIGLLKETSLAFTLGVMEMFA), and 190–210 (FETYLAVAIVYWVLTIIYSIL). One can recognise an ABC transmembrane type-1 domain in the interval 20 to 211 (LPITLFMAIA…VLTIIYSILQ (192 aa)).

It belongs to the binding-protein-dependent transport system permease family. In terms of assembly, the complex is composed of two ATP-binding proteins (YxeO), two transmembrane proteins (YxeN) and a solute-binding protein (YxeM).

Its subcellular location is the cell membrane. Functionally, probably part of the ABC transporter complex YxeMNO that could be involved in amino-acid import. May transport S-methylcysteine. Probably responsible for the translocation of the substrate across the membrane. The polypeptide is Probable amino-acid permease protein YxeN (yxeN) (Bacillus subtilis (strain 168)).